Reading from the N-terminus, the 514-residue chain is Maturase K (514 aa).

Belongs to the intron maturase 2 family. MatK subfamily.

It localises to the plastid. It is found in the chloroplast. Usually encoded in the trnK tRNA gene intron. Probably assists in splicing its own and other chloroplast group II introns. This chain is Maturase K, found in Drosophyllum lusitanicum (Portuguese sundew).